A 103-amino-acid polypeptide reads, in one-letter code: Cobalt transport protein CbiN (103 aa).

The next 2 helical transmembrane spans lie at 6-26 and 68-88; these read VLTN…PFFV and LLFA…LGYL.

Belongs to the CbiN family. Forms an energy-coupling factor (ECF) transporter complex composed of an ATP-binding protein (A component, CbiO), a transmembrane protein (T component, CbiQ) and 2 possible substrate-capture proteins (S components, CbiM and CbiN) of unknown stoichimetry.

Its subcellular location is the cell membrane. Its pathway is cofactor biosynthesis; adenosylcobalamin biosynthesis. Part of the energy-coupling factor (ECF) transporter complex CbiMNOQ involved in cobalt import. The polypeptide is Cobalt transport protein CbiN (Clostridium perfringens (strain 13 / Type A)).